Reading from the N-terminus, the 262-residue chain is UPF0619 GPI-anchored membrane protein C1322.10 (262 aa).

A signal peptide spans 1 to 20; sequence MLARVGTTLFFLANALAAYA. Disordered stretches follow at residues 136–165 and 175–194; these read STSA…SSST and ISSS…SGSI. N-linked (GlcNAc...) asparagine glycosylation is found at Asn207 and Asn227. The GPI-like-anchor amidated asparagine moiety is linked to residue Asn242. Residues 243-262 constitute a propeptide, removed in mature form; it reads GVAQLSVAACMGIAALMLIA.

Belongs to the UPF0619 family.

The protein localises to the golgi apparatus membrane. It localises to the cell membrane. The polypeptide is UPF0619 GPI-anchored membrane protein C1322.10 (Schizosaccharomyces pombe (strain 972 / ATCC 24843) (Fission yeast)).